The chain runs to 349 residues: 11-beta-hydroxysteroid dehydrogenase 1A (349 aa).

Residues 10–30 traverse the membrane as a helical; Signal-anchor for type II membrane protein segment; sequence LTAPFFTFFGLCFFLPPFYFF. Residues 54 to 80 and aspartate 105 each bind NADP(+); that span reads GASSGIGEQLAYEYACRGACLALTARR. Serine 184 is a substrate binding site. Tyrosine 197 functions as the Proton acceptor in the catalytic mechanism. Residues 197–201 and lysine 201 each bind NADP(+); that span reads YNASK.

It belongs to the short-chain dehydrogenases/reductases (SDR) family. In terms of tissue distribution, expressed in the above-ground part of seedlings, especially in the vascular tissues. Also detected in the buds and silique pedicels. Highly induced in oil-accumulating tissues of maturing seeds.

The protein resides in the lipid droplet. The protein localises to the membrane. The catalysed reaction is an 11beta-hydroxysteroid + NADP(+) = an 11-oxosteroid + NADPH + H(+). The enzyme catalyses 17beta-estradiol + NADP(+) = estrone + NADPH + H(+). It carries out the reaction corticosterone + NADP(+) = 11-dehydrocorticosterone + NADPH + H(+). It catalyses the reaction cortisone + NADPH + H(+) = cortisol + NADP(+). Its function is as follows. Catalyzes 11-beta, 17-beta-hydroxysteroid and reduces 17-beta-ketosteroids. Involved in regulating plant growth and development, probably promoting or mediating brassinosteroid effects. Plays a role during seed maturation. This chain is 11-beta-hydroxysteroid dehydrogenase 1A (HSD1), found in Arabidopsis thaliana (Mouse-ear cress).